The primary structure comprises 1179 residues: Protein turtle homolog A (1179 aa).

The signal sequence occupies residues 1 to 20; the sequence is MIWCLRLTVLSLIISQGADG. Residues 21-734 lie on the Extracellular side of the membrane; it reads RRKPEVVSVV…TQLPGLLPQP (714 aa). Ig-like domains are found at residues 24 to 124, 136 to 216, 226 to 318, 322 to 410, and 418 to 502; these read PEVV…DFAN, PQFQ…GSIT, PPVI…AYLT, PAQV…SPVT, and PAFI…TNVY. 2 cysteine pairs are disulfide-bonded: Cys-41–Cys-108 and Cys-158–Cys-206. N-linked (GlcNAc...) asparagine glycosylation is found at Asn-188, Asn-239, and Asn-256. 3 disulfide bridges follow: Cys-248-Cys-301, Cys-344-Cys-395, and Cys-440-Cys-486. 2 consecutive Fibronectin type-III domains span residues 507–611 and 623–718; these read SPHV…TTPA and PLSP…TSGL. Residues Asn-513 and Asn-524 are each glycosylated (N-linked (GlcNAc...) asparagine). Residues 735–755 form a helical membrane-spanning segment; that stretch reads VLAGVVGGVCFLGVAVLVSIL. At 756-1179 the chain is on the cytoplasmic side; it reads AACLMNRRRA…ISYPEQATLL (424 aa). The interval 767–807 is disordered; that stretch reads RRHRKRLRQDPPLIFSPRGKSGSHSAPGSGSPDSVTKFKLQ. Over residues 785-800 the composition is skewed to low complexity; that stretch reads GKSGSHSAPGSGSPDS. Position 809 is a phosphoserine (Ser-809). Disordered regions lie at residues 819–842, 942–974, and 1016–1079; these read LWGE…PLPL, PPLE…DSPP, and APRG…KRRN. Residues 944-954 show a composition bias toward pro residues; sequence LEEPTPAPPPD. Over residues 1020–1029 the composition is skewed to polar residues; it reads SLTSQSSGRG. Positions 1177–1179 match the PDZ-binding motif; sequence TLL.

Belongs to the immunoglobulin superfamily. Turtle family. As to quaternary structure, interacts with MAGI2 and SHANK1. In terms of tissue distribution, expressed in both cell bodies and dendrites of cortical and hippocampal neurons and also cerebellar Purkinje cells (at protein level).

It localises to the cell membrane. The protein localises to the synapse. Its function is as follows. Functions in dendrite outgrowth and synapse maturation. In Mus musculus (Mouse), this protein is Protein turtle homolog A (Igsf9).